We begin with the raw amino-acid sequence, 289 residues long: Oxygen-dependent coproporphyrinogen-III oxidase (289 aa).

S82 serves as a coordination point for substrate. The a divalent metal cation site is built by H86 and H96. H96 acts as the Proton donor in catalysis. Position 98–100 (98–100) interacts with substrate; sequence NYR. Positions 130 and 160 each coordinate a divalent metal cation. Positions 224-259 are important for dimerization; sequence YVEFNLVWDRGTIFGLQTNGRIESILMSMPPLVRWE.

It belongs to the aerobic coproporphyrinogen-III oxidase family. In terms of assembly, homodimer. The cofactor is a divalent metal cation.

It localises to the cytoplasm. The enzyme catalyses coproporphyrinogen III + O2 + 2 H(+) = protoporphyrinogen IX + 2 CO2 + 2 H2O. It functions in the pathway porphyrin-containing compound metabolism; protoporphyrin-IX biosynthesis; protoporphyrinogen-IX from coproporphyrinogen-III (O2 route): step 1/1. In terms of biological role, involved in the heme and chlorophyll biosynthesis. Catalyzes the aerobic oxidative decarboxylation of propionate groups of rings A and B of coproporphyrinogen-III to yield the vinyl groups in protoporphyrinogen-IX. The chain is Oxygen-dependent coproporphyrinogen-III oxidase from Gloeobacter violaceus (strain ATCC 29082 / PCC 7421).